A 636-amino-acid chain; its full sequence is LDL receptor repeat-containing protein egg-1 (636 aa).

Residues M1 to S130 are Cytoplasmic-facing. A helical; Signal-anchor for type II membrane protein transmembrane segment spans residues V131 to T151. The Extracellular portion of the chain corresponds to L152–Y636. The N-linked (GlcNAc...) asparagine glycan is linked to N202. 8 consecutive LDL-receptor class A domains span residues T205–K243, E244–K296, T298–N335, K336–D375, T378–P415, K457–T499, E503–S541, and Q542–S579. Intrachain disulfides connect C213-C233, C227-C242, C245-C273, C251-C286, C280-C295, C299-C312, C306-C325, C319-C334, C337-C365, C359-C374, C379-C392, C387-C405, C399-C414, C458-C476, C466-C489, C483-C498, C504-C518, C514-C531, C525-C540, C543-C556, C550-C569, and C563-C578. The N-linked (GlcNAc...) asparagine glycan is linked to N508. N614 is a glycosylation site (N-linked (GlcNAc...) asparagine).

It is found in the cell membrane. Its function is as follows. Probable receptor which is required for the oocyte-to-zygote transition although its exact function is controversial. Seems to be required for fertilization probably by promoting the interaction or fusion between sperm and oocyte. Conversely, shown to be dispensable for fertilization but required for the formation of a continuous and cohesive eggshell chitin layer by maintaining a homogenous distribution of chitin synthase chs-1 at the unfertilized oocyte cell membrane. Appears to recruit or maintain together to the unfertilized oocyte cortex several proteins including chs-1, kinase mbk-2 and pseudophosphatases egg-3, and possibly egg-4 and egg-5. This Caenorhabditis briggsae protein is LDL receptor repeat-containing protein egg-1.